The primary structure comprises 213 residues: Probable nicotinate-nucleotide adenylyltransferase (213 aa).

This sequence belongs to the NadD family.

The catalysed reaction is nicotinate beta-D-ribonucleotide + ATP + H(+) = deamido-NAD(+) + diphosphate. It functions in the pathway cofactor biosynthesis; NAD(+) biosynthesis; deamido-NAD(+) from nicotinate D-ribonucleotide: step 1/1. Catalyzes the reversible adenylation of nicotinate mononucleotide (NaMN) to nicotinic acid adenine dinucleotide (NaAD). In Escherichia coli O45:K1 (strain S88 / ExPEC), this protein is Probable nicotinate-nucleotide adenylyltransferase.